Consider the following 437-residue polypeptide: GTPase Obg (437 aa).

The Obg domain occupies S2 to L160. The OBG-type G domain maps to A161–A338. Residues G167–S174, F192–V196, D214–G217, N284–D287, and S319–L321 each bind GTP. The Mg(2+) site is built by S174 and T194. The OCT domain occupies G359 to D437.

It belongs to the TRAFAC class OBG-HflX-like GTPase superfamily. OBG GTPase family. In terms of assembly, monomer. Mg(2+) is required as a cofactor.

It is found in the cytoplasm. In terms of biological role, an essential GTPase which binds GTP, GDP and possibly (p)ppGpp with moderate affinity, with high nucleotide exchange rates and a fairly low GTP hydrolysis rate. Plays a role in control of the cell cycle, stress response, ribosome biogenesis and in those bacteria that undergo differentiation, in morphogenesis control. This is GTPase Obg from Streptococcus equi subsp. equi (strain 4047).